The primary structure comprises 106 residues: uncharacterized protein (106 aa).

Belongs to the csb family.

This is an uncharacterized protein from Dictyostelium discoideum (Social amoeba).